The sequence spans 554 residues: Pigment biosynthesis transcriptional activator pigB (554 aa).

A disordered region spans residues 1 to 21 (MFTSSSPEQRKPRQSRQLPGA). Residues 23-40 (CEECRRKKLRCDRQQPQC) constitute a DNA-binding region (zn(2)-C6 fungal-type).

It localises to the nucleus. In terms of biological role, transcription factor; part of the gene cluster that mediates the biosynthesis of azaphilone pigments (MonAzPs), a complex mixture of compounds with a common azaphilone skeleton very widely used as food colorants. Positively regulates the expression of the azaphilone pigments (MonAzPs) gene cluster. This chain is Pigment biosynthesis transcriptional activator pigB, found in Monascus ruber (Mold).